The chain runs to 230 residues: Cytochrome c oxidase subunit 2 (230 aa).

Topologically, residues 1 to 14 (MAHPSQLGFQDAAS) are mitochondrial intermembrane. Residues 15-45 (PVMEELLHFHDHALMIVFLISTLVLYIIVAM) form a helical membrane-spanning segment. At 46-59 (VSTKLTNKYILDSQ) the chain is on the mitochondrial matrix side. The chain crosses the membrane as a helical span at residues 60 to 87 (EIEIIWTVLPAVILILIALPSLRILYLM). The Mitochondrial intermembrane portion of the chain corresponds to 88 to 230 (DEINDPHLTI…SWSSLMLEDA (143 aa)). The Cu cation site is built by His161, Cys196, Glu198, Cys200, His204, and Met207. Mg(2+) is bound at residue Glu198.

It belongs to the cytochrome c oxidase subunit 2 family. Component of the cytochrome c oxidase (complex IV, CIV), a multisubunit enzyme composed of 14 subunits. The complex is composed of a catalytic core of 3 subunits MT-CO1, MT-CO2 and MT-CO3, encoded in the mitochondrial DNA, and 11 supernumerary subunits COX4I, COX5A, COX5B, COX6A, COX6B, COX6C, COX7A, COX7B, COX7C, COX8 and NDUFA4, which are encoded in the nuclear genome. The complex exists as a monomer or a dimer and forms supercomplexes (SCs) in the inner mitochondrial membrane with NADH-ubiquinone oxidoreductase (complex I, CI) and ubiquinol-cytochrome c oxidoreductase (cytochrome b-c1 complex, complex III, CIII), resulting in different assemblies (supercomplex SCI(1)III(2)IV(1) and megacomplex MCI(2)III(2)IV(2)). Found in a complex with TMEM177, COA6, COX18, COX20, SCO1 and SCO2. Interacts with TMEM177 in a COX20-dependent manner. Interacts with COX20. Interacts with COX16. Requires Cu cation as cofactor.

The protein resides in the mitochondrion inner membrane. The catalysed reaction is 4 Fe(II)-[cytochrome c] + O2 + 8 H(+)(in) = 4 Fe(III)-[cytochrome c] + 2 H2O + 4 H(+)(out). In terms of biological role, component of the cytochrome c oxidase, the last enzyme in the mitochondrial electron transport chain which drives oxidative phosphorylation. The respiratory chain contains 3 multisubunit complexes succinate dehydrogenase (complex II, CII), ubiquinol-cytochrome c oxidoreductase (cytochrome b-c1 complex, complex III, CIII) and cytochrome c oxidase (complex IV, CIV), that cooperate to transfer electrons derived from NADH and succinate to molecular oxygen, creating an electrochemical gradient over the inner membrane that drives transmembrane transport and the ATP synthase. Cytochrome c oxidase is the component of the respiratory chain that catalyzes the reduction of oxygen to water. Electrons originating from reduced cytochrome c in the intermembrane space (IMS) are transferred via the dinuclear copper A center (CU(A)) of subunit 2 and heme A of subunit 1 to the active site in subunit 1, a binuclear center (BNC) formed by heme A3 and copper B (CU(B)). The BNC reduces molecular oxygen to 2 water molecules using 4 electrons from cytochrome c in the IMS and 4 protons from the mitochondrial matrix. The protein is Cytochrome c oxidase subunit 2 (mt-co2) of Gadus morhua (Atlantic cod).